Consider the following 252-residue polypeptide: Hydroxyacylglutathione hydrolase (252 aa).

Positions 54, 56, 58, 59, 111, 128, and 166 each coordinate Zn(2+).

It belongs to the metallo-beta-lactamase superfamily. Glyoxalase II family. In terms of assembly, monomer. Requires Zn(2+) as cofactor.

It carries out the reaction an S-(2-hydroxyacyl)glutathione + H2O = a 2-hydroxy carboxylate + glutathione + H(+). It functions in the pathway secondary metabolite metabolism; methylglyoxal degradation; (R)-lactate from methylglyoxal: step 2/2. Functionally, thiolesterase that catalyzes the hydrolysis of S-D-lactoyl-glutathione to form glutathione and D-lactic acid. This is Hydroxyacylglutathione hydrolase from Vibrio cholerae serotype O1 (strain ATCC 39541 / Classical Ogawa 395 / O395).